A 496-amino-acid polypeptide reads, in one-letter code: Probable cytosol aminopeptidase (496 aa).

Mn(2+)-binding residues include lysine 258 and aspartate 263. Lysine 270 is an active-site residue. The Mn(2+) site is built by aspartate 281, aspartate 340, and glutamate 342. Residue arginine 344 is part of the active site.

This sequence belongs to the peptidase M17 family. Mn(2+) is required as a cofactor.

The protein localises to the cytoplasm. It carries out the reaction Release of an N-terminal amino acid, Xaa-|-Yaa-, in which Xaa is preferably Leu, but may be other amino acids including Pro although not Arg or Lys, and Yaa may be Pro. Amino acid amides and methyl esters are also readily hydrolyzed, but rates on arylamides are exceedingly low.. The catalysed reaction is Release of an N-terminal amino acid, preferentially leucine, but not glutamic or aspartic acids.. In terms of biological role, presumably involved in the processing and regular turnover of intracellular proteins. Catalyzes the removal of unsubstituted N-terminal amino acids from various peptides. This Helicobacter pylori (strain G27) protein is Probable cytosol aminopeptidase.